The following is a 306-amino-acid chain: RNA-binding protein Raly (306 aa).

Residue Ser2 is modified to N-acetylserine. Lys4 is covalently cross-linked (Glycyl lysine isopeptide (Lys-Gly) (interchain with G-Cter in SUMO2)). Positions 21–92 constitute an RRM domain; the sequence is SRVFIGNLNT…QTLDINMAGE (72 aa). Lys44 carries the N6-acetyllysine modification. Ser63 carries the post-translational modification Phosphoserine. Residues Lys94 and Lys99 each participate in a glycyl lysine isopeptide (Lys-Gly) (interchain with G-Cter in SUMO2) cross-link. Phosphoserine is present on residues Ser106 and Ser135. Residue Lys159 forms a Glycyl lysine isopeptide (Lys-Gly) (interchain with G-Cter in SUMO2) linkage. Lys165 carries the post-translational modification N6-acetyllysine; alternate. Lys165 is covalently cross-linked (Glycyl lysine isopeptide (Lys-Gly) (interchain with G-Cter in SUMO2); alternate). Glycyl lysine isopeptide (Lys-Gly) (interchain with G-Cter in SUMO2) cross-links involve residues Lys179 and Lys191. Positions 183–216 form a coiled coil; it reads KSSELQAIKTELTQIKSNIDALLSRLEQIAAEQK. Residues 215–306 form a disordered region; that stretch reads QKANPDGKKK…DTDADDGALQ (92 aa). Positions 217–226 are enriched in basic and acidic residues; it reads ANPDGKKKGD. The span at 227 to 252 shows a compositional bias: gly residues; that stretch reads GGGAGGGGGGGGSGGGGSGGGGGGGS. An epitope (recognized by BKRF1 antibodies) region spans residues 227-253; sequence GGGAGGGGGGGGSGGGGSGGGGGGGSS. A Phosphothreonine modification is found at Thr262. Residue Ser264 is modified to Phosphoserine. A Phosphothreonine modification is found at Thr286. A compositionally biased stretch (basic and acidic residues) spans 287–297; sequence HSEEELEHSQD. A phosphoserine mark is found at Ser288 and Ser295. Phosphothreonine is present on Thr298.

It belongs to the RRM HNRPC family. RALY subfamily. In terms of assembly, identified in the spliceosome C complex. Interacts (through its RNA-binding domain) with FUS (through its RNA-binding domain); both are components of the same RNPs. In terms of tissue distribution, expressed in heart, brain, lung, liver, skeletal muscle, kidney and pancreas. Weakly expressed in placenta.

The protein localises to the nucleus. In terms of biological role, RNA-binding protein that acts as a transcriptional cofactor for cholesterol biosynthetic genes in the liver. Binds the lipid-responsive non-coding RNA LeXis and is required for LeXis-mediated effect on cholesterogenesis. May be a heterogeneous nuclear ribonucleoprotein (hnRNP). In Homo sapiens (Human), this protein is RNA-binding protein Raly (RALY).